We begin with the raw amino-acid sequence, 142 residues long: Hemoglobin subunit alpha-A (142 aa).

Positions 2–142 (VLSANDKTNV…VGNVLTAKYR (141 aa)) constitute a Globin domain. His-59 provides a ligand contact to O2. Residue His-88 coordinates heme b.

The protein belongs to the globin family. In terms of assembly, heterotetramer of two alpha chains and two beta chains. As to expression, red blood cells.

Functionally, involved in oxygen transport from the lung to the various peripheral tissues. The chain is Hemoglobin subunit alpha-A (HBAA) from Aquila chrysaetos (Golden eagle).